The chain runs to 248 residues: 2,3-bisphosphoglycerate-dependent phosphoglycerate mutase (248 aa).

Substrate-binding positions include 8 to 15, 21 to 22, Arg-60, 87 to 90, Lys-98, 114 to 115, and 183 to 184; these read RHGESEWN, TG, ERHY, RR, and GN. His-9 functions as the Tele-phosphohistidine intermediate in the catalytic mechanism. The Proton donor/acceptor role is filled by Glu-87.

It belongs to the phosphoglycerate mutase family. BPG-dependent PGAM subfamily.

The catalysed reaction is (2R)-2-phosphoglycerate = (2R)-3-phosphoglycerate. The protein operates within carbohydrate degradation; glycolysis; pyruvate from D-glyceraldehyde 3-phosphate: step 3/5. In terms of biological role, catalyzes the interconversion of 2-phosphoglycerate and 3-phosphoglycerate. The sequence is that of 2,3-bisphosphoglycerate-dependent phosphoglycerate mutase from Borrelia hermsii (strain HS1 / DAH).